Here is a 154-residue protein sequence, read N- to C-terminus: 3-hydroxyacyl-[acyl-carrier-protein] dehydratase FabZ (154 aa).

The active site involves His60.

The protein belongs to the thioester dehydratase family. FabZ subfamily.

The protein localises to the cytoplasm. The enzyme catalyses a (3R)-hydroxyacyl-[ACP] = a (2E)-enoyl-[ACP] + H2O. Functionally, involved in unsaturated fatty acids biosynthesis. Catalyzes the dehydration of short chain beta-hydroxyacyl-ACPs and long chain saturated and unsaturated beta-hydroxyacyl-ACPs. The chain is 3-hydroxyacyl-[acyl-carrier-protein] dehydratase FabZ from Actinobacillus pleuropneumoniae serotype 5b (strain L20).